The sequence spans 227 residues: Cytochrome c oxidase subunit 2 (227 aa).

Over 1–22 the chain is Mitochondrial intermembrane; it reads MAYPFQLGLQDATSPIMEELMN. A helical transmembrane segment spans residues 23 to 44; it reads FHDHTLMIVFLISSLVLYIISL. At 45–60 the chain is on the mitochondrial matrix side; sequence MLTTKLTHTSTMDAQE. A helical membrane pass occupies residues 61–81; sequence VETIWTILPAVILIMIALPSL. Residues 82 to 227 lie on the Mitochondrial intermembrane side of the membrane; sequence RILYMMDEIN…YFENWSASMI (146 aa). H161, C196, E198, C200, H204, and M207 together coordinate Cu cation. Residue E198 coordinates Mg(2+). Y218 carries the phosphotyrosine modification.

Belongs to the cytochrome c oxidase subunit 2 family. As to quaternary structure, component of the cytochrome c oxidase (complex IV, CIV), a multisubunit enzyme composed of 14 subunits. The complex is composed of a catalytic core of 3 subunits MT-CO1, MT-CO2 and MT-CO3, encoded in the mitochondrial DNA, and 11 supernumerary subunits COX4I, COX5A, COX5B, COX6A, COX6B, COX6C, COX7A, COX7B, COX7C, COX8 and NDUFA4, which are encoded in the nuclear genome. The complex exists as a monomer or a dimer and forms supercomplexes (SCs) in the inner mitochondrial membrane with NADH-ubiquinone oxidoreductase (complex I, CI) and ubiquinol-cytochrome c oxidoreductase (cytochrome b-c1 complex, complex III, CIII), resulting in different assemblies (supercomplex SCI(1)III(2)IV(1) and megacomplex MCI(2)III(2)IV(2)). Found in a complex with TMEM177, COA6, COX18, COX20, SCO1 and SCO2. Interacts with TMEM177 in a COX20-dependent manner. Interacts with COX20. Interacts with COX16. It depends on Cu cation as a cofactor.

It localises to the mitochondrion inner membrane. It catalyses the reaction 4 Fe(II)-[cytochrome c] + O2 + 8 H(+)(in) = 4 Fe(III)-[cytochrome c] + 2 H2O + 4 H(+)(out). In terms of biological role, component of the cytochrome c oxidase, the last enzyme in the mitochondrial electron transport chain which drives oxidative phosphorylation. The respiratory chain contains 3 multisubunit complexes succinate dehydrogenase (complex II, CII), ubiquinol-cytochrome c oxidoreductase (cytochrome b-c1 complex, complex III, CIII) and cytochrome c oxidase (complex IV, CIV), that cooperate to transfer electrons derived from NADH and succinate to molecular oxygen, creating an electrochemical gradient over the inner membrane that drives transmembrane transport and the ATP synthase. Cytochrome c oxidase is the component of the respiratory chain that catalyzes the reduction of oxygen to water. Electrons originating from reduced cytochrome c in the intermembrane space (IMS) are transferred via the dinuclear copper A center (CU(A)) of subunit 2 and heme A of subunit 1 to the active site in subunit 1, a binuclear center (BNC) formed by heme A3 and copper B (CU(B)). The BNC reduces molecular oxygen to 2 water molecules using 4 electrons from cytochrome c in the IMS and 4 protons from the mitochondrial matrix. The protein is Cytochrome c oxidase subunit 2 (Mtco2) of Mus musculus (Mouse).